Reading from the N-terminus, the 526-residue chain is GMP synthase [glutamine-hydrolyzing] (526 aa).

The region spanning 13 to 204 (TVLVVDFGAQ…LYRGAGLSPD (192 aa)) is the Glutamine amidotransferase type-1 domain. Catalysis depends on C90, which acts as the Nucleophile. Residues H178 and E180 contribute to the active site. The 196-residue stretch at 205-400 (WTTGNVIEEQ…LGLPDEIVQR (196 aa)) folds into the GMPS ATP-PPase domain. An ATP-binding site is contributed by 232 to 238 (SGGVDSA).

In terms of assembly, homodimer.

The catalysed reaction is XMP + L-glutamine + ATP + H2O = GMP + L-glutamate + AMP + diphosphate + 2 H(+). The protein operates within purine metabolism; GMP biosynthesis; GMP from XMP (L-Gln route): step 1/1. Catalyzes the synthesis of GMP from XMP. In Streptomyces coelicolor (strain ATCC BAA-471 / A3(2) / M145), this protein is GMP synthase [glutamine-hydrolyzing] (guaA).